Here is a 555-residue protein sequence, read N- to C-terminus: Energy-dependent translational throttle protein EttA (555 aa).

ABC transporter domains lie at 6–259 and 324–550; these read YTMH…AQEA and LEVS…RIKY. 39-46 lines the ATP pocket; the sequence is GLNGAGKS. An arm region spans residues 95 to 139; sequence SEVVNALKRLDEVYALYADPDADFDKLAAEQGRLEEIIQAHDGHN. Residues 242-322 are ptIM; the sequence is GNYSSWLEQK…IPPGPRLGDK (81 aa). ATP is bound at residue 356–363; that stretch reads GPNGAGKS.

Belongs to the ABC transporter superfamily. ABCF family. Translational throttle EttA subfamily. Monomer. Probably contacts ribosomal proteins L1, L5, L33 and S7, the 16S and 23S rRNA and the P-site containing tRNA(fMet).

Its subcellular location is the cytoplasm. It carries out the reaction ATP + H2O = ADP + phosphate + H(+). In terms of biological role, a translation factor that gates the progression of the 70S ribosomal initiation complex (IC, containing tRNA(fMet) in the P-site) into the translation elongation cycle by using a mechanism sensitive to the ATP/ADP ratio. Binds to the 70S ribosome E-site where it modulates the state of the translating ribosome during subunit translocation. ATP hydrolysis probably frees it from the ribosome, which can enter the elongation phase. This chain is Energy-dependent translational throttle protein EttA, found in Escherichia coli O157:H7.